Consider the following 192-residue polypeptide: Acetyltransferase PA3944 (192 aa).

Positions 18–187 (LLLRAWRDSD…RHILYRVDAA (170 aa)) constitute an N-acetyltransferase domain. CoA is bound by residues 105–107 (WRL), G113, N145, and 150–152 (GLM).

Functionally, catalyzes the transfer of an acetyl group from acetyl coenzyme A (AcCoA) to an acceptor substrate and releases both CoA and the acetylated product. It prefers the peptide Asp-Phe methyl ester (or aspartame) and the peptide antibiotics polymyxin B and colistin. Other substrates like dopamine, serotonin, puromycin, chloramphenicol, D-glucosamine, glycine and N-alpha-acetyl-L-glutamine are used and displayed lower activity. The chain is Acetyltransferase PA3944 from Pseudomonas aeruginosa (strain ATCC 15692 / DSM 22644 / CIP 104116 / JCM 14847 / LMG 12228 / 1C / PRS 101 / PAO1).